Consider the following 334-residue polypeptide: Retinol dehydrogenase 14 (334 aa).

51 to 57 (GANSGLG) serves as a coordination point for NADP(+). Ser190 contributes to the substrate binding site. Tyr215 functions as the Proton acceptor in the catalytic mechanism.

Belongs to the short-chain dehydrogenases/reductases (SDR) family.

It catalyses the reaction all-trans-retinol + NADP(+) = all-trans-retinal + NADPH + H(+). The catalysed reaction is 11-cis-retinol + NADP(+) = 11-cis-retinal + NADPH + H(+). The enzyme catalyses 9-cis-retinol + NADP(+) = 9-cis-retinal + NADPH + H(+). Retinol dehydrogenase with a clear preference for NADP. Displays high activity towards 9-cis, 11-cis and all-trans-retinol. Shows a very weak activity towards 13-cis-retinol. Has no activity towards steroids. The polypeptide is Retinol dehydrogenase 14 (Rdh14) (Mus musculus (Mouse)).